A 75-amino-acid polypeptide reads, in one-letter code: Bacteriocin lactococcin-A (75 aa).

Positions 1-21 are excised as a propeptide; sequence MKNQLNFNIVSDEELSEANGG. The helical transmembrane segment at 30-52 threads the bilayer; that stretch reads AAGDLYYNTNTHKYVYQQTQNAF.

It is found in the secreted. The protein localises to the host cell membrane. Functionally, kills Lactococci. The sequence is that of Bacteriocin lactococcin-A (lcnA) from Lactococcus lactis subsp. cremoris (Streptococcus cremoris).